A 581-amino-acid chain; its full sequence is NADH-quinone oxidoreductase subunit C/D (581 aa).

The tract at residues 1 to 172 (MSASELVTEL…PLFNMTASLF (172 aa)) is NADH dehydrogenase I subunit C. The NADH dehydrogenase I subunit D stretch occupies residues 196–581 (ELMILNYGPH…IDYVMSDVDR (386 aa)).

The protein in the N-terminal section; belongs to the complex I 30 kDa subunit family. In the C-terminal section; belongs to the complex I 49 kDa subunit family. NDH-1 is composed of 13 different subunits. Subunits NuoB, CD, E, F, and G constitute the peripheral sector of the complex.

The protein localises to the cell inner membrane. The enzyme catalyses a quinone + NADH + 5 H(+)(in) = a quinol + NAD(+) + 4 H(+)(out). NDH-1 shuttles electrons from NADH, via FMN and iron-sulfur (Fe-S) centers, to quinones in the respiratory chain. The immediate electron acceptor for the enzyme in this species is believed to be ubiquinone. Couples the redox reaction to proton translocation (for every two electrons transferred, four hydrogen ions are translocated across the cytoplasmic membrane), and thus conserves the redox energy in a proton gradient. The polypeptide is NADH-quinone oxidoreductase subunit C/D (Rhodopseudomonas palustris (strain TIE-1)).